The following is a 961-amino-acid chain: MTAHRIPLSDLEQGIPFEQRHIGPDSEARAKMLAQVGYGSLDELTATAVPDVIKNAEALELPGARTEAEVLAELRSLADRNQVLGSMIGLGYYGTFTPPVILRNVMENPAWYTAYTPYQPEISQGRLEALLNFQTVVAELTGLPTSGASLLDEGTAAAEAMALSRRMGKNKKGLFLVDADALPQTIAVIETRAEPTGVEVVVADLSEGIPAGIAEREINGVLIQYPGASGAVRDIKPLVEQAHELGAVVTVAADLLALTLLTSPGELGADIAVGTTQRFGVPMGFGGPHAGYMAVREKFARSLPGRLVGVSVDADGHKAYRLALQTREQHIRREKATSNICTAQVLLAVMAGMYAVYHGPDGLRTIARRTHRYATILAEGLKAGGVEVVHGAYFDTLTARVPGRAAEIVAAAREGGVNLHLVDADLVSISCDETTTRAQLGAVWTAFGVEGDIEALDAAAEDTLPAALLRTDDYLTHPVFHQYRSETAMLRYLRRLSDRDYALDRGMIPLGSCTMKLNATTEMEPVTWPEFGQLHPFAPAEQAQGYLTLIRELEERLAEVTGYDKVSLQPNAGSQGELAGLLAVRGYHRANGDEQRTVCLIPSSAHGTNAASAVMAGMKVVVVKTADDGEIDVEDLRAKIEQYRDELSVLMITYPSTHGVFEEHVADICAQVHEAGGQVYVDGANLNALVGLAKPGHFGGDVSHLNLHKTFCIPHGGGGPGVGPVGVRAHLAPYLPNHPLQPEAGPATGVGPISAAPWGSAGILPISWSYVRLMGGEGLKRATQVAVLSANYIAKRLEPHYPVLYTGPGGLVAHECIIDLRPLTKATGVSVDDIAKRLIDYGFHAPTMSFPVAGTLMIEPTESEDLGELDRFCEAMIAIRAEVEKVGSGEWPAEDNPLRNAPHTAAALGGEWEHAYSREEAVFPAGVSAADKYWPPVRRIDQAFGDRNLVCSCPPLDAYDD.

N6-(pyridoxal phosphate)lysine is present on Lys-709.

It belongs to the GcvP family. As to quaternary structure, the glycine cleavage system is composed of four proteins: P, T, L and H. Requires pyridoxal 5'-phosphate as cofactor.

It carries out the reaction N(6)-[(R)-lipoyl]-L-lysyl-[glycine-cleavage complex H protein] + glycine + H(+) = N(6)-[(R)-S(8)-aminomethyldihydrolipoyl]-L-lysyl-[glycine-cleavage complex H protein] + CO2. Functionally, the glycine cleavage system catalyzes the degradation of glycine. The P protein binds the alpha-amino group of glycine through its pyridoxal phosphate cofactor; CO(2) is released and the remaining methylamine moiety is then transferred to the lipoamide cofactor of the H protein. The protein is Glycine dehydrogenase (decarboxylating) of Streptomyces avermitilis (strain ATCC 31267 / DSM 46492 / JCM 5070 / NBRC 14893 / NCIMB 12804 / NRRL 8165 / MA-4680).